The sequence spans 471 residues: Trigger factor (471 aa).

Residues 169-254 (EDRVTIDYLG…VKEVAKPNEL (86 aa)) enclose the PPIase FKBP-type domain. Residues 435–471 (VSKEELTAEDEDAASEAKPAKKAAAKKKAEEGKSEEA) form a disordered region. A compositionally biased stretch (basic and acidic residues) spans 461 to 471 (KKAEEGKSEEA).

Belongs to the FKBP-type PPIase family. Tig subfamily.

It is found in the cytoplasm. It carries out the reaction [protein]-peptidylproline (omega=180) = [protein]-peptidylproline (omega=0). Involved in protein export. Acts as a chaperone by maintaining the newly synthesized protein in an open conformation. Functions as a peptidyl-prolyl cis-trans isomerase. This Brucella abortus (strain S19) protein is Trigger factor.